The sequence spans 214 residues: dITP/XTP pyrophosphatase (214 aa).

13–18 (SHNKGK) provides a ligand contact to substrate. Mg(2+)-binding residues include Glu45 and Asp74. The active-site Proton acceptor is Asp74. Substrate-binding positions include Ser75, 163 to 166 (FGYD), Lys186, and 199 to 200 (HR).

Belongs to the HAM1 NTPase family. Homodimer. It depends on Mg(2+) as a cofactor.

The catalysed reaction is XTP + H2O = XMP + diphosphate + H(+). It catalyses the reaction dITP + H2O = dIMP + diphosphate + H(+). The enzyme catalyses ITP + H2O = IMP + diphosphate + H(+). In terms of biological role, pyrophosphatase that catalyzes the hydrolysis of nucleoside triphosphates to their monophosphate derivatives, with a high preference for the non-canonical purine nucleotides XTP (xanthosine triphosphate), dITP (deoxyinosine triphosphate) and ITP. Seems to function as a house-cleaning enzyme that removes non-canonical purine nucleotides from the nucleotide pool, thus preventing their incorporation into DNA/RNA and avoiding chromosomal lesions. This chain is dITP/XTP pyrophosphatase, found in Agrobacterium fabrum (strain C58 / ATCC 33970) (Agrobacterium tumefaciens (strain C58)).